Consider the following 436-residue polypeptide: Cyclin-A2-2 (436 aa).

It belongs to the cyclin family. Cyclin AB subfamily. As to expression, expressed in roots, stems, leaves, flowers and siliques.

This Arabidopsis thaliana (Mouse-ear cress) protein is Cyclin-A2-2 (CYCA2-2).